Reading from the N-terminus, the 936-residue chain is 2-oxoglutarate dehydrogenase E1 component (936 aa).

It belongs to the alpha-ketoglutarate dehydrogenase family. In terms of assembly, homodimer. Part of the 2-oxoglutarate dehydrogenase (OGDH) complex composed of E1 (2-oxoglutarate dehydrogenase), E2 (dihydrolipoamide succinyltransferase) and E3 (dihydrolipoamide dehydrogenase); the complex contains multiple copies of the three enzymatic components (E1, E2 and E3). It depends on thiamine diphosphate as a cofactor.

It carries out the reaction N(6)-[(R)-lipoyl]-L-lysyl-[protein] + 2-oxoglutarate + H(+) = N(6)-[(R)-S(8)-succinyldihydrolipoyl]-L-lysyl-[protein] + CO2. Its function is as follows. E1 component of the 2-oxoglutarate dehydrogenase (OGDH) complex which catalyzes the decarboxylation of 2-oxoglutarate, the first step in the conversion of 2-oxoglutarate to succinyl-CoA and CO(2). This is 2-oxoglutarate dehydrogenase E1 component (sucA) from Rickettsia prowazekii (strain Madrid E).